Consider the following 568-residue polypeptide: 2-isopropylmalate synthase (568 aa).

The Pyruvate carboxyltransferase domain maps to 37-313 (PRWLSTDLRD…DPMIDFSNID (277 aa)). 4 residues coordinate Mg(2+): Asp46, His252, His254, and Asn288. Residues 455 to 568 (EGVVGVMAYR…CSAVNRAQQS (114 aa)) are regulatory domain.

The protein belongs to the alpha-IPM synthase/homocitrate synthase family. LeuA type 2 subfamily. Homodimer. Mg(2+) serves as cofactor.

Its subcellular location is the cytoplasm. It catalyses the reaction 3-methyl-2-oxobutanoate + acetyl-CoA + H2O = (2S)-2-isopropylmalate + CoA + H(+). Its pathway is amino-acid biosynthesis; L-leucine biosynthesis; L-leucine from 3-methyl-2-oxobutanoate: step 1/4. In terms of biological role, catalyzes the condensation of the acetyl group of acetyl-CoA with 3-methyl-2-oxobutanoate (2-ketoisovalerate) to form 3-carboxy-3-hydroxy-4-methylpentanoate (2-isopropylmalate). The sequence is that of 2-isopropylmalate synthase from Thermobifida fusca (strain YX).